The primary structure comprises 204 residues: Large ribosomal subunit protein uL4 (204 aa).

Positions 53–74 (AYVSGGGKKPWRQKGRGGARAG) are disordered.

Belongs to the universal ribosomal protein uL4 family. Part of the 50S ribosomal subunit.

Functionally, one of the primary rRNA binding proteins, this protein initially binds near the 5'-end of the 23S rRNA. It is important during the early stages of 50S assembly. It makes multiple contacts with different domains of the 23S rRNA in the assembled 50S subunit and ribosome. Its function is as follows. Forms part of the polypeptide exit tunnel. The sequence is that of Large ribosomal subunit protein uL4 from Campylobacter curvus (strain 525.92).